A 180-amino-acid chain; its full sequence is Large ribosomal subunit protein uL6 (180 aa).

Belongs to the universal ribosomal protein uL6 family. In terms of assembly, part of the 50S ribosomal subunit.

This protein binds to the 23S rRNA, and is important in its secondary structure. It is located near the subunit interface in the base of the L7/L12 stalk, and near the tRNA binding site of the peptidyltransferase center. The polypeptide is Large ribosomal subunit protein uL6 (Clostridium botulinum (strain Loch Maree / Type A3)).